The primary structure comprises 410 residues: UPF0761 membrane protein Csal_1895 (410 aa).

The next 6 helical transmembrane spans lie at 43 to 63, 99 to 119, 139 to 159, 180 to 200, 212 to 232, and 247 to 267; these read LFAVVPFMTVLYAMLSAIPSF, SLTLIGLMFLLVTAVMMMVTV, FLLYWAVLTLGPLLLGSGFLL, VAFLRLLPLTLSFTAFVFIYM, AVAGAGLAALALELAKGAFSL, and FAAVPLFLVWVFLSWAIVLVG.

Belongs to the UPF0761 family.

It is found in the cell inner membrane. This chain is UPF0761 membrane protein Csal_1895, found in Chromohalobacter salexigens (strain ATCC BAA-138 / DSM 3043 / CIP 106854 / NCIMB 13768 / 1H11).